The chain runs to 218 residues: UPF0329 protein ECU10_1860 (218 aa).

It belongs to the UPF0329 family.

The chain is UPF0329 protein ECU10_1860 from Encephalitozoon cuniculi (strain GB-M1) (Microsporidian parasite).